Here is a 409-residue protein sequence, read N- to C-terminus: Putative competence-damage inducible protein (409 aa).

It belongs to the CinA family.

This is Putative competence-damage inducible protein from Clostridium botulinum (strain Kyoto / Type A2).